Consider the following 223-residue polypeptide: Small ribosomal subunit protein uS3 (223 aa).

The KH type-2 domain maps to Ile-38 to Lys-106.

Belongs to the universal ribosomal protein uS3 family. As to quaternary structure, part of the 30S ribosomal subunit. Forms a tight complex with proteins S10 and S14.

Binds the lower part of the 30S subunit head. Binds mRNA in the 70S ribosome, positioning it for translation. The chain is Small ribosomal subunit protein uS3 from Lactobacillus delbrueckii subsp. bulgaricus (strain ATCC 11842 / DSM 20081 / BCRC 10696 / JCM 1002 / NBRC 13953 / NCIMB 11778 / NCTC 12712 / WDCM 00102 / Lb 14).